Consider the following 141-residue polypeptide: Putative pre-16S rRNA nuclease (141 aa).

Belongs to the YqgF nuclease family.

It is found in the cytoplasm. Could be a nuclease involved in processing of the 5'-end of pre-16S rRNA. The protein is Putative pre-16S rRNA nuclease of Cupriavidus taiwanensis (strain DSM 17343 / BCRC 17206 / CCUG 44338 / CIP 107171 / LMG 19424 / R1) (Ralstonia taiwanensis (strain LMG 19424)).